Reading from the N-terminus, the 223-residue chain is Pyridoxine/pyridoxamine 5'-phosphate oxidase (223 aa).

Substrate contacts are provided by residues 8–11 (RVDY) and Lys65. FMN-binding positions include 60–65 (RTVLLK), 75–76 (YT), Arg81, Lys82, and Gln104. Positions 122, 126, and 130 each coordinate substrate. Residues 139–140 (QS) and Trp188 contribute to the FMN site. 194-196 (RLH) lines the substrate pocket. An FMN-binding site is contributed by Arg198.

It belongs to the pyridoxamine 5'-phosphate oxidase family. Homodimer. The cofactor is FMN.

The catalysed reaction is pyridoxamine 5'-phosphate + O2 + H2O = pyridoxal 5'-phosphate + H2O2 + NH4(+). The enzyme catalyses pyridoxine 5'-phosphate + O2 = pyridoxal 5'-phosphate + H2O2. Its pathway is cofactor metabolism; pyridoxal 5'-phosphate salvage; pyridoxal 5'-phosphate from pyridoxamine 5'-phosphate: step 1/1. It functions in the pathway cofactor metabolism; pyridoxal 5'-phosphate salvage; pyridoxal 5'-phosphate from pyridoxine 5'-phosphate: step 1/1. Catalyzes the oxidation of either pyridoxine 5'-phosphate (PNP) or pyridoxamine 5'-phosphate (PMP) into pyridoxal 5'-phosphate (PLP). This is Pyridoxine/pyridoxamine 5'-phosphate oxidase from Kineococcus radiotolerans (strain ATCC BAA-149 / DSM 14245 / SRS30216).